Reading from the N-terminus, the 889-residue chain is 97 kDa heat shock protein (889 aa).

2 disordered regions span residues 504-622 (EDAM…ATTD) and 812-889 (FVCD…MELD). The span at 549 to 585 (SADKEEQADNGSKETSKDSKDQTSESSKSDKESKDQN) shows a compositional bias: basic and acidic residues. Positions 586–597 (SEGSKSDNSSTE) are enriched in polar residues. The span at 869-889 (ASKEGETKPDETKPDVEMELD) shows a compositional bias: basic and acidic residues.

This sequence belongs to the heat shock protein 70 family.

Cell surface recognition protein that binds acrosome-reacted sperm and thereby mediates binding and subsequent fusion of the sperm and egg. The chain is 97 kDa heat shock protein from Strongylocentrotus purpuratus (Purple sea urchin).